Here is a 404-residue protein sequence, read N- to C-terminus: MKLPIYLDYSATTPVDPRVAQKMIECLTVEGNFGNPASRSHVFGWKAEEAVENARRQVADLVSADPREIVWTSGATESNNLAIKGVAHFYASKGKHLITSKVEHKAVLDTTRQLEREGFEVTYIEPGEDGLITPSMIEAALRDDTILVSIMHVNNEIGTINDIAAIGELTRSRGVLFHVDGAQSTGKVEIDLASLKVDLMSFSAHKTYGPKGIGALYVSRKPRVRLEAAMHGGGHERGMRSGTLATHQIVGMGEAFRIAKEEMAAESVRIKALSDRFYKQVENLEELYVNGSLTARVPHNLNLSFNYVEGESLIMALKDLAVSSGSACTSASLEPSYVLRALGRNDELAHSSIRFTFGRFSTEEEIDYAAQKVCEAVTRLRALSPLWDMFKDGVDISKIEWAAH.

Pyridoxal 5'-phosphate contacts are provided by residues 75 to 76 (AT), N155, Q183, and 203 to 205 (SAH). K206 carries the post-translational modification N6-(pyridoxal phosphate)lysine. T243 serves as a coordination point for pyridoxal 5'-phosphate. C328 functions as the Cysteine persulfide intermediate in the catalytic mechanism. A [2Fe-2S] cluster-binding site is contributed by C328.

The protein belongs to the class-V pyridoxal-phosphate-dependent aminotransferase family. NifS/IscS subfamily. Homodimer. Forms a heterotetramer with IscU, interacts with other sulfur acceptors. Pyridoxal 5'-phosphate is required as a cofactor.

The protein resides in the cytoplasm. It catalyses the reaction (sulfur carrier)-H + L-cysteine = (sulfur carrier)-SH + L-alanine. It participates in cofactor biosynthesis; iron-sulfur cluster biosynthesis. Its function is as follows. Master enzyme that delivers sulfur to a number of partners involved in Fe-S cluster assembly, tRNA modification or cofactor biosynthesis. Catalyzes the removal of elemental sulfur atoms from cysteine to produce alanine. Functions as a sulfur delivery protein for Fe-S cluster synthesis onto IscU, an Fe-S scaffold assembly protein, as well as other S acceptor proteins. The polypeptide is Cysteine desulfurase IscS (Pseudomonas syringae pv. tomato (strain ATCC BAA-871 / DC3000)).